Consider the following 901-residue polypeptide: Envelope glycoprotein B (901 aa).

The first 34 residues, 1 to 34, serve as a signal peptide directing secretion; sequence MRPVRGIARSRILSCSWRGTWTSALTILYLGVYC. Topologically, residues 35–736 are virion surface; the sequence is ESTTVTPTTV…GALVTFVTNP (702 aa). Asn53, Asn60, and Asn66 each carry an N-linked (GlcNAc...) asparagine; by host glycan. Disulfide bonds link Cys84–Cys533, Cys101–Cys489, Cys174–Cys239, and Cys331–Cys380. Positions 141-147 are involved in fusion and/or binding to host membrane; sequence SYKYVTY. An N-linked (GlcNAc...) asparagine; by host glycan is attached at Asn197. Residues 226–233 form an involved in fusion and/or binding to host membrane region; that stretch reads GSVWLYKE. 10 N-linked (GlcNAc...) asparagine; by host glycosylation sites follow: Asn270, Asn289, Asn328, Asn372, Asn398, Asn406, Asn436, Asn537, Asn571, and Asn623. Cys559 and Cys596 are disulfide-bonded. Hydrophobic membrane proximal region stretches follow at residues 683–734 and 714–734; these read VERV…TFVT and AVGA…TFVT. The chain crosses the membrane as a helical span at residues 737–757; that stretch reads FGAFVVFLFCVGCITLVITVY. Residues 758–901 lie on the Intravirion side of the membrane; sequence RRQRRAMQRP…KLNTEDDVHV (144 aa). Disordered regions lie at residues 794-813 and 852-901; these read GPEG…APYG and DDKK…DVHV. Composition is skewed to basic and acidic residues over residues 852–864 and 872–883; these read DDKK…KSSK and SETRRRPGIMDR. Positions 890–893 match the Internalization motif motif; it reads YQKL.

Belongs to the herpesviridae glycoprotein B family. Homotrimer; disulfide-linked. Binds to heparan sulfate proteoglycans. Interacts with gH/gL heterodimer. Post-translationally, a proteolytic cleavage by host furin generates two subunits that remain linked by disulfide bonds.

The protein resides in the virion membrane. It localises to the host cell membrane. The protein localises to the host endosome membrane. It is found in the host Golgi apparatus membrane. In terms of biological role, envelope glycoprotein that forms spikes at the surface of virion envelope. Essential for the initial attachment to heparan sulfate moieties of the host cell surface proteoglycans. Involved in fusion of viral and cellular membranes leading to virus entry into the host cell. Following initial binding to its host receptors, membrane fusion is mediated by the fusion machinery composed at least of gB and the heterodimer gH/gL. May be involved in the fusion between the virion envelope and the outer nuclear membrane during virion egress. This chain is Envelope glycoprotein B, found in Guinea pig cytomegalovirus (strain 22122) (GPCMV).